A 748-amino-acid polypeptide reads, in one-letter code: Catalase-peroxidase (748 aa).

Positions 1–14 (MTDTSDARPPHSDA) are enriched in basic and acidic residues. Positions 1-40 (MTDTSDARPPHSDAKTASNSESENPAIDSPEPKSHAPLTN) are disordered. The segment at residues 112 to 239 (WHAAGTYRIF…FGATTMGLIY (128 aa)) is a cross-link (tryptophyl-tyrosyl-methioninium (Trp-Tyr) (with M-265)). His-113 acts as the Proton acceptor in catalysis. Positions 239–265 (YVNPEGPEGKPDPLAAAHDIRETFGRM) form a cross-link, tryptophyl-tyrosyl-methioninium (Tyr-Met) (with W-112). Residue His-280 coordinates heme b.

The protein belongs to the peroxidase family. Peroxidase/catalase subfamily. As to quaternary structure, homodimer or homotetramer. Heme b is required as a cofactor. In terms of processing, formation of the three residue Trp-Tyr-Met cross-link is important for the catalase, but not the peroxidase activity of the enzyme.

It catalyses the reaction H2O2 + AH2 = A + 2 H2O. The catalysed reaction is 2 H2O2 = O2 + 2 H2O. Functionally, bifunctional enzyme with both catalase and broad-spectrum peroxidase activity. This is Catalase-peroxidase from Mycolicibacterium gilvum (strain PYR-GCK) (Mycobacterium gilvum (strain PYR-GCK)).